A 124-amino-acid polypeptide reads, in one-letter code: MRDSKDRFIIRKNRVRAKIAKLSGGCYPRLSVFKSNRHIYAQVIENIGSNKSNTIAAASTLDKDIFTESKYYKCNIQYAKKVGQLLAERANSKGITSVVFDRGGYKYHGVIKALADGAREKLNF.

It belongs to the universal ribosomal protein uL18 family. As to quaternary structure, part of the 50S ribosomal subunit; part of the 5S rRNA/L5/L18/L25 subcomplex. Contacts the 5S and 23S rRNAs.

In terms of biological role, this is one of the proteins that bind and probably mediate the attachment of the 5S RNA into the large ribosomal subunit, where it forms part of the central protuberance. This Orientia tsutsugamushi (strain Boryong) (Rickettsia tsutsugamushi) protein is Large ribosomal subunit protein uL18.